We begin with the raw amino-acid sequence, 212 residues long: Ribonuclease HII (212 aa).

The RNase H type-2 domain maps to 4-206; sequence EVQCGIDEAG…YKKIKEDVES (203 aa). Residues Asp-10, Glu-11, and Asp-103 each coordinate a divalent metal cation.

The protein belongs to the RNase HII family. Mn(2+) is required as a cofactor. Requires Mg(2+) as cofactor.

It localises to the cytoplasm. It carries out the reaction Endonucleolytic cleavage to 5'-phosphomonoester.. In terms of biological role, endonuclease that specifically degrades the RNA of RNA-DNA hybrids. The polypeptide is Ribonuclease HII (Thermoplasma volcanium (strain ATCC 51530 / DSM 4299 / JCM 9571 / NBRC 15438 / GSS1)).